Consider the following 511-residue polypeptide: GMP synthase [glutamine-hydrolyzing] (511 aa).

Positions Met-5–Asp-195 constitute a Glutamine amidotransferase type-1 domain. The Nucleophile role is filled by Cys-82. Residues His-169 and Glu-171 contribute to the active site. The region spanning Trp-196–Arg-386 is the GMPS ATP-PPase domain. Ser-223–Ser-229 contacts ATP.

In terms of assembly, homodimer.

The enzyme catalyses XMP + L-glutamine + ATP + H2O = GMP + L-glutamate + AMP + diphosphate + 2 H(+). Its pathway is purine metabolism; GMP biosynthesis; GMP from XMP (L-Gln route): step 1/1. Its function is as follows. Catalyzes the synthesis of GMP from XMP. The protein is GMP synthase [glutamine-hydrolyzing] of Ruminiclostridium cellulolyticum (strain ATCC 35319 / DSM 5812 / JCM 6584 / H10) (Clostridium cellulolyticum).